Reading from the N-terminus, the 222-residue chain is Putative RING finger protein ORF118 (222 aa).

The RING-type zinc finger occupies 78–114 (CCICMAKNNRKEALPCQHNVCRDCYYKPMRNNCPVCN). The interval 184 to 222 (IENRIHNNNNNNYDENNPDDLPVIHPPRRRHRQTAHISI) is disordered. Over residues 189 to 198 (HNNNNNNYDE) the composition is skewed to low complexity. Positions 209–222 (PPRRRHRQTAHISI) are enriched in basic residues.

This chain is Putative RING finger protein ORF118, found in Magallana gigas (Pacific oyster).